The primary structure comprises 153 residues: MFTESMLFLLLFLLLGLIAKNNSLIIAVAVVILLKLFHVDGKAMEMIQAKGINWGVTIITVAILIPIATGQIGFKDLIDSFKSAAGWIGLGAGIAVSILAKKGVGYMAVDPQVTVSLVFGTILAVVLFRGIAAGPVIAAGIAYMAMQLVAFIK.

A run of 4 helical transmembrane segments spans residues 6-26, 54-74, 80-100, and 117-137; these read MLFL…SLII, WGVT…QIGF, SFKS…SILA, and LVFG…GPVI.

Belongs to the UPF0756 family.

The protein localises to the cell membrane. The protein is UPF0756 membrane protein Lm4b_01579 of Listeria monocytogenes serotype 4b (strain CLIP80459).